Consider the following 104-residue polypeptide: MDKSKRLFLKSKRSFRRRLPPIPSGDRIDYRNMSLISRFISEQGKILSRRVNRLTLKQQRLITIAIKQARILSLLPFLNNDKNDKQFERSESTPRTIGLRTRNK.

Residues 84-104 (DKQFERSESTPRTIGLRTRNK) are disordered.

The protein belongs to the bacterial ribosomal protein bS18 family. In terms of assembly, part of the 30S ribosomal subunit.

It localises to the plastid. Its subcellular location is the chloroplast. This chain is Small ribosomal subunit protein bS18c, found in Cucumis sativus (Cucumber).